The primary structure comprises 233 residues: uncharacterized protein (233 aa).

The N-terminal stretch at 1–23 is a signal peptide; the sequence is MEIKYFLVLLVGFLLVLPSIVNP. The interval 42 to 217 is disordered; it reads LDVNNPHNPN…HHHHQEASEC (176 aa). Residues 45-64 are compositionally biased toward low complexity; sequence NNPHNPNNNPHNPHNPNNNP. Residues 65–211 show a composition bias toward basic residues; sequence HHPHHLHHHH…HPHPHHHHHH (147 aa).

The protein resides in the secreted. This is an uncharacterized protein from Dictyostelium discoideum (Social amoeba).